A 331-amino-acid polypeptide reads, in one-letter code: Histone-lysine N-methyltransferase, H3 lysine-9 specific dim-5 (331 aa).

A Pre-SET domain is found at 77-159; that stretch reads VGCSCASDEE…DCPNRVVERG (83 aa). Residues cysteine 79, cysteine 81, cysteine 87, cysteine 92, cysteine 94, cysteine 141, cysteine 145, cysteine 147, and cysteine 151 each contribute to the Zn(2+) site. Residues 162–297 form the SET domain; it reads VPLQIFRTKD…KGTELTFDYV (136 aa). S-adenosyl-L-methionine contacts are provided by residues 172–174, aspartate 215, tyrosine 217, arginine 251, and 254–255; these read RGW and NH. 4 residues coordinate Zn(2+): cysteine 257, cysteine 319, cysteine 321, and cysteine 326. The region spanning 315–331 is the Post-SET domain; it reads EMTKCLCGTAKCRGYLW.

This sequence belongs to the class V-like SAM-binding methyltransferase superfamily. Histone-lysine methyltransferase family. Suvar3-9 subfamily.

The protein resides in the nucleus. The protein localises to the chromosome. The catalysed reaction is L-lysyl(9)-[histone H3] + 3 S-adenosyl-L-methionine = N(6),N(6),N(6)-trimethyl-L-lysyl(9)-[histone H3] + 3 S-adenosyl-L-homocysteine + 3 H(+). Histone methyltransferase that specifically trimethylates histone H3 to form H3K9me3. H3K9me3 marks chromatin regions for DNA methylation. Dim-5 recognizes Arg-8 to Gly-12 of the H3 tail with Thr-11 and Gly-12 being the most important specificity determinants, the recognition of whcih is important to distinguish H3K9 from H3K27 and H4K20. The sequence is that of Histone-lysine N-methyltransferase, H3 lysine-9 specific dim-5 (dim-5) from Neurospora crassa (strain ATCC 24698 / 74-OR23-1A / CBS 708.71 / DSM 1257 / FGSC 987).